Reading from the N-terminus, the 217-residue chain is Outer-membrane lipoprotein LolB (217 aa).

The N-terminal stretch at 1–20 (MSKALRTLALSGLVLVGLSA) is a signal peptide. Cys-21 carries N-palmitoyl cysteine lipidation. The S-diacylglycerol cysteine moiety is linked to residue Cys-21.

This sequence belongs to the LolB family. Monomer.

It localises to the cell outer membrane. Plays a critical role in the incorporation of lipoproteins in the outer membrane after they are released by the LolA protein. This is Outer-membrane lipoprotein LolB from Xanthomonas oryzae pv. oryzae (strain MAFF 311018).